We begin with the raw amino-acid sequence, 470 residues long: AAA-ATPase At5g40000 (470 aa).

Positions 1-30 (MMMMGDSFGSIGSSMASLFFLWATIQQIFP) are cleaved as a signal peptide. 248–255 (GPPGTGKS) provides a ligand contact to ATP.

Belongs to the AAA ATPase family. BCS1 subfamily. Mg(2+) is required as a cofactor.

It carries out the reaction ATP + H2O = ADP + phosphate + H(+). The protein is AAA-ATPase At5g40000 of Arabidopsis thaliana (Mouse-ear cress).